The chain runs to 693 residues: DNA-directed RNA polymerase subunit beta' (693 aa).

Cys-76, Cys-78, Cys-94, and Cys-97 together coordinate Zn(2+). Mg(2+)-binding residues include Asp-496, Asp-498, and Asp-500.

This sequence belongs to the RNA polymerase beta' chain family. RpoC1 subfamily. In plastids the minimal PEP RNA polymerase catalytic core is composed of four subunits: alpha, beta, beta', and beta''. When a (nuclear-encoded) sigma factor is associated with the core the holoenzyme is formed, which can initiate transcription. Mg(2+) is required as a cofactor. Requires Zn(2+) as cofactor.

It is found in the plastid. The protein localises to the chloroplast. It catalyses the reaction RNA(n) + a ribonucleoside 5'-triphosphate = RNA(n+1) + diphosphate. Functionally, DNA-dependent RNA polymerase catalyzes the transcription of DNA into RNA using the four ribonucleoside triphosphates as substrates. This chain is DNA-directed RNA polymerase subunit beta', found in Nuphar advena (Common spatterdock).